A 181-amino-acid polypeptide reads, in one-letter code: MAKFLDAVAGFGVTFASMFKKHVTEEYPEKPGPVAPRYHGRHQLNRYPDGLEKCIGCELCAWACPADAIYVEGADNTEELRYSPGERYGRVYQINYLRCIGCGLCVEACPTRALTMTNDYEMADDNRADLIYEKDRLLAPLLPEMTAPPHPRAPGATDKDYYLGNVTAHGLREAQRAGEPR.

4Fe-4S ferredoxin-type domains follow at residues 44-74 (LNRY…VEGA) and 90-119 (RVYQ…MTND). Residues cysteine 54, cysteine 57, cysteine 60, cysteine 64, cysteine 99, cysteine 102, cysteine 105, and cysteine 109 each contribute to the [4Fe-4S] cluster site.

It belongs to the complex I 23 kDa subunit family. As to quaternary structure, NDH-1 is composed of 14 different subunits. Subunits NuoA, H, J, K, L, M, N constitute the membrane sector of the complex. The cofactor is [4Fe-4S] cluster.

It localises to the cell membrane. The enzyme catalyses a quinone + NADH + 5 H(+)(in) = a quinol + NAD(+) + 4 H(+)(out). In terms of biological role, NDH-1 shuttles electrons from NADH, via FMN and iron-sulfur (Fe-S) centers, to quinones in the respiratory chain. The immediate electron acceptor for the enzyme in this species is believed to be menaquinone. Couples the redox reaction to proton translocation (for every two electrons transferred, four hydrogen ions are translocated across the cytoplasmic membrane), and thus conserves the redox energy in a proton gradient. In Mycolicibacterium paratuberculosis (strain ATCC BAA-968 / K-10) (Mycobacterium paratuberculosis), this protein is NADH-quinone oxidoreductase subunit I 2.